A 335-amino-acid polypeptide reads, in one-letter code: LIM and SH3 domain protein F42H10.3 (335 aa).

The LIM zinc-binding domain occupies 5-65 (CAREDCGKTV…DPHYPKTVAS (61 aa)). Nebulin repeat units lie at residues 66–97 (VMADTPEMRRIAENTKNQSNIKYHAEYEKMKG) and 98–132 (TKIEIADDPEMERLKKNTQVQSNVSYHGVLDQKAR). The span at 128 to 142 (DQKARQEEVRPKEEI) shows a compositional bias: basic and acidic residues. 2 disordered regions span residues 128 to 151 (DQKARQEEVRPKEEISPNPTPTPI) and 233 to 264 (DFAGAPPPSSNSISSTSPHSTLSSPQSTISPT). Low complexity predominate over residues 242–260 (SNSISSTSPHSTLSSPQST). In terms of domain architecture, SH3 spans 266 to 327 (KAGFAVKAIY…PANYVQPHKL (62 aa)).

This is LIM and SH3 domain protein F42H10.3 from Caenorhabditis elegans.